A 586-amino-acid polypeptide reads, in one-letter code: Tetratricopeptide repeat protein 39B (586 aa).

3 TPR repeats span residues 292 to 325 (SIIL…QQEW), 483 to 516 (CLVQ…EKRV), and 524 to 557 (PFTF…YKDY).

This sequence belongs to the TTC39 family.

Its function is as follows. May be involved in lipid metabolism. This is Tetratricopeptide repeat protein 39B (ttc39b) from Xenopus laevis (African clawed frog).